A 453-amino-acid polypeptide reads, in one-letter code: UDP-N-acetylmuramoylalanine--D-glutamate ligase (453 aa).

117–123 (GTNGKTT) lines the ATP pocket.

Belongs to the MurCDEF family.

The protein localises to the cytoplasm. It catalyses the reaction UDP-N-acetyl-alpha-D-muramoyl-L-alanine + D-glutamate + ATP = UDP-N-acetyl-alpha-D-muramoyl-L-alanyl-D-glutamate + ADP + phosphate + H(+). The protein operates within cell wall biogenesis; peptidoglycan biosynthesis. Cell wall formation. Catalyzes the addition of glutamate to the nucleotide precursor UDP-N-acetylmuramoyl-L-alanine (UMA). The polypeptide is UDP-N-acetylmuramoylalanine--D-glutamate ligase (Caldicellulosiruptor saccharolyticus (strain ATCC 43494 / DSM 8903 / Tp8T 6331)).